The primary structure comprises 264 residues: MRVVVVTLALLFLTGTQARYFWQHDEPQAPLDRLRDLVDVYLETVKASGKDAIAQFEASAVGKQLDLKLADNLDTLGAAAAKLREDMAPYYKEVREMWLKDTESLRAELTKDLEEVKEKIRPFLDQFSAKWTEELEQYRQRLAPVAEELKELTKQKVELMQQKLTPVAEEARDRLRGHVEELRKNLAPYSDELRQKLSQKLEEIREKGIPQAAEYQAKVVEQLSNLREKMTPLVQDFKERLTPYAENLKTRFISLLDELQKTVA.

Residues 1 to 18 (MRVVVVTLALLFLTGTQA) form the signal peptide. Tandem repeats lie at residues 67 to 88 (LKLA…EDMA) and 89 to 110 (PYYK…AELT). The interval 67 to 264 (LKLADNLDTL…LLDELQKTVA (198 aa)) is 10 X approximate tandem repeats. Residues 111–121 (KDLEEVKEKIR) form a 3; half-length repeat. 5 consecutive repeat copies span residues 122-143 (PFLD…QRLA), 144-165 (PVAE…QKLT), 166-187 (PVAE…KNLA), 188-209 (PYSD…EKGI), and 210-231 (PQAA…EKMT). One copy of the 9; half-length repeat lies at 232-242 (PLVQDFKERLT). Repeat unit 10 spans residues 243–264 (PYAENLKTRFISLLDELQKTVA).

This sequence belongs to the apolipoprotein A1/A4/E family. In terms of tissue distribution, major protein of plasma HDL, also found in chylomicrons.

The protein resides in the secreted. Its function is as follows. Participates in the reverse transport of cholesterol from tissues to the liver for excretion by promoting cholesterol efflux from tissues and by acting as a cofactor for the lecithin cholesterol acyltransferase (LCAT). In Anas platyrhynchos (Mallard), this protein is Apolipoprotein A-I (APOA1).